Consider the following 400-residue polypeptide: Egl nine homolog 1 (400 aa).

Ala2 bears the N-acetylalanine mark. The interval 6–20 (GGPGVLSASERDRQY) is required for nuclear export. Phosphoserine is present on Ser12. Residues Cys21, Cys24, Cys33, Cys36, Cys42, His46, His54, and Cys58 each contribute to the Zn(2+) site. The MYND-type; atypical zinc-finger motif lies at 21–58 (CELCGKMENLLRCGRCRSSFYCCKEHQRQDWKKHKLVC). Positions 62–74 (EAPRAQPAPAQPR) are enriched in low complexity. Residues 62 to 161 (EAPRAQPAPA…PGGGLRPNGQ (100 aa)) are disordered. Position 114 is a phosphoserine (Ser114). The segment covering 142–157 (AGGGPGEALSPGGGLR) has biased composition (gly residues). An S-nitrosocysteine mark is found at Cys178 and Cys185. The beta(2)beta(3) 'finger-like' loop stretch occupies residues 218–228 (VSQKSDSSKDI). One can recognise a Fe2OG dioxygenase domain in the interval 271–369 (GRTKAMVACY…RYAITVWYFD (99 aa)). Cys279 carries the post-translational modification S-nitrosocysteine. Fe cation-binding residues include His290 and Asp292. Cys300 and Cys303 each carry S-nitrosocysteine. Fe cation is bound at residue His351. Residue Arg360 coordinates 2-oxoglutarate.

In terms of assembly, monomer. Interacts with ING4; the interaction inhibits the hydroxylation of HIF alpha proteins. Interacts with PTGES3 (via PXLE motif); thereby recruiting EGLN1 to the HSP90 pathway to facilitate HIF alpha proteins hydroxylation. Interacts with LIMD1. Found in a complex composed of LIMD1, VHL, EGLN1/PHD2, ELOB and CUL2. Interacts with EPAS1. Interacts with CBFA2T3 and HIF1A. Requires Fe(2+) as cofactor. It depends on L-ascorbate as a cofactor. In terms of processing, S-nitrosylation inhibits the enzyme activity up to 60% under aerobic conditions. Chelation of Fe(2+) has no effect on the S-nitrosylation. It is uncertain whether nitrosylation occurs on Cys-300 or Cys-303. In terms of tissue distribution, expressed in heart, brain liver, skeletal muscle and kidney. Low levels were detected in the lung. Constitutively expressed during differentiation of C2C12 skeletal myocytes.

The protein localises to the cytoplasm. It localises to the nucleus. The catalysed reaction is L-prolyl-[hypoxia-inducible factor alpha subunit] + 2-oxoglutarate + O2 = trans-4-hydroxy-L-prolyl-[hypoxia-inducible factor alpha subunit] + succinate + CO2. Its function is as follows. Cellular oxygen sensor that catalyzes, under normoxic conditions, the post-translational formation of 4-hydroxyproline in hypoxia-inducible factor (HIF) alpha proteins. Hydroxylates a specific proline found in each of the oxygen-dependent degradation (ODD) domains (N-terminal, NODD, and C-terminal, CODD) of HIF1A. Also hydroxylates HIF2A. Has a preference for the CODD site for both HIF1A and HIF1B. Hydroxylated HIFs are then targeted for proteasomal degradation via the von Hippel-Lindau ubiquitination complex. Under hypoxic conditions, the hydroxylation reaction is attenuated allowing HIFs to escape degradation resulting in their translocation to the nucleus, heterodimerization with HIF1B, and increased expression of hypoxy-inducible genes. EGLN1 is the most important isozyme under normoxia and, through regulating the stability of HIF1, involved in various hypoxia-influenced processes such as angiogenesis in retinal and cardiac functionality. Target proteins are preferentially recognized via a LXXLAP motif. The sequence is that of Egl nine homolog 1 (Egln1) from Mus musculus (Mouse).